Reading from the N-terminus, the 303-residue chain is Coenzyme PQQ synthesis protein B (303 aa).

Belongs to the PqqB family.

The protein operates within cofactor biosynthesis; pyrroloquinoline quinone biosynthesis. May be involved in the transport of PQQ or its precursor to the periplasm. The chain is Coenzyme PQQ synthesis protein B from Pseudomonas entomophila (strain L48).